Reading from the N-terminus, the 287-residue chain is tRNA pseudouridine synthase B (287 aa).

The active-site Nucleophile is the Asp-38.

Belongs to the pseudouridine synthase TruB family. Type 1 subfamily.

It carries out the reaction uridine(55) in tRNA = pseudouridine(55) in tRNA. Responsible for synthesis of pseudouridine from uracil-55 in the psi GC loop of transfer RNAs. This Fusobacterium nucleatum subsp. nucleatum (strain ATCC 25586 / DSM 15643 / BCRC 10681 / CIP 101130 / JCM 8532 / KCTC 2640 / LMG 13131 / VPI 4355) protein is tRNA pseudouridine synthase B.